A 189-amino-acid chain; its full sequence is Pyridoxal 5'-phosphate synthase subunit PdxT (189 aa).

52-54 contributes to the L-glutamine binding site; it reads GES. The active-site Nucleophile is Cys81. L-glutamine contacts are provided by residues Arg108 and 136 to 137; that span reads IR. Residues His172 and Glu174 each act as charge relay system in the active site.

It belongs to the glutaminase PdxT/SNO family. In the presence of PdxS, forms a dodecamer of heterodimers. Only shows activity in the heterodimer.

It catalyses the reaction aldehydo-D-ribose 5-phosphate + D-glyceraldehyde 3-phosphate + L-glutamine = pyridoxal 5'-phosphate + L-glutamate + phosphate + 3 H2O + H(+). The catalysed reaction is L-glutamine + H2O = L-glutamate + NH4(+). It functions in the pathway cofactor biosynthesis; pyridoxal 5'-phosphate biosynthesis. In terms of biological role, catalyzes the hydrolysis of glutamine to glutamate and ammonia as part of the biosynthesis of pyridoxal 5'-phosphate. The resulting ammonia molecule is channeled to the active site of PdxS. The protein is Pyridoxal 5'-phosphate synthase subunit PdxT of Haemophilus ducreyi (strain 35000HP / ATCC 700724).